The sequence spans 133 residues: Small ribosomal subunit protein uS8 (133 aa).

It belongs to the universal ribosomal protein uS8 family. As to quaternary structure, part of the 30S ribosomal subunit. Contacts proteins S5 and S12.

Functionally, one of the primary rRNA binding proteins, it binds directly to 16S rRNA central domain where it helps coordinate assembly of the platform of the 30S subunit. This Chlamydia abortus (strain DSM 27085 / S26/3) (Chlamydophila abortus) protein is Small ribosomal subunit protein uS8.